The chain runs to 232 residues: tRNA pseudouridine synthase B (232 aa).

Aspartate 53 serves as the catalytic Nucleophile.

The protein belongs to the pseudouridine synthase TruB family. Type 1 subfamily.

It catalyses the reaction uridine(55) in tRNA = pseudouridine(55) in tRNA. Responsible for synthesis of pseudouridine from uracil-55 in the psi GC loop of transfer RNAs. The protein is tRNA pseudouridine synthase B of Malacoplasma penetrans (strain HF-2) (Mycoplasma penetrans).